Consider the following 453-residue polypeptide: Acyl-coenzyme A thioesterase 2, mitochondrial (453 aa).

The N-terminal 42 residues, 1–42 (MVASSFAVLRASRLCQQDWKSWARLFVPPPLSTGGRTTWART), are a transit peptide targeting the mitochondrion. K83 carries the post-translational modification N6-acetyllysine. Catalysis depends on charge relay system residues S273, D365, and H399. The residue at position 447 (K447) is an N6-succinyllysine.

Belongs to the C/M/P thioester hydrolase family. Monomer. As to expression, highly expressed in brown and white adipose tissue, muscle, heart, kidney, lung, adrenal gland and spleen; weakly expressed in intestine, testis and brain.

The protein resides in the mitochondrion matrix. The enzyme catalyses hexadecanoyl-CoA + H2O = hexadecanoate + CoA + H(+). It carries out the reaction tetradecanoyl-CoA + H2O = tetradecanoate + CoA + H(+). The catalysed reaction is octadecanoyl-CoA + H2O = octadecanoate + CoA + H(+). It catalyses the reaction eicosanoyl-CoA + H2O = eicosanoate + CoA + H(+). The enzyme catalyses decanoyl-CoA + H2O = decanoate + CoA + H(+). It carries out the reaction dodecanoyl-CoA + H2O = dodecanoate + CoA + H(+). The catalysed reaction is (9Z)-octadecenoyl-CoA + H2O = (9Z)-octadecenoate + CoA + H(+). It catalyses the reaction (9Z)-hexadecenoyl-CoA + H2O = (9Z)-hexadecenoate + CoA + H(+). The enzyme catalyses (9E)-octadecenoyl-CoA + H2O = (9E)-octadecenoate + CoA + H(+). It carries out the reaction (9Z,12Z)-octadecadienoyl-CoA + H2O = (9Z,12Z)-octadecadienoate + CoA + H(+). The protein operates within lipid metabolism; fatty acid metabolism. Its function is as follows. Catalyzes the hydrolysis of acyl-CoAs into free fatty acids and coenzyme A (CoASH), regulating their respective intracellular levels. Displays higher activity toward long chain acyl CoAs (C14-C20). The enzyme is involved in enhancing the hepatic fatty acid oxidation in mitochondria. The protein is Acyl-coenzyme A thioesterase 2, mitochondrial (Acot2) of Mus musculus (Mouse).